A 206-amino-acid chain; its full sequence is MELKVTTLEGQEAGSVQLSDAIFGLEPRNDIVQRCVIWQLAKRQAGTHKAKGRAEVWRTGKKMYKQKGTGGARHGSQRVPQFRGGGRAFGPVVRSHAIDLPKKVRALALRHALSAKAKGGGLIVIDKAELEAAKTKALVGAFSGLGLTNALIIDGAEVNTGFATAARNIPNIDVLPIQGINVYDIVRRRKLVLTKAALDALEARFK.

The protein belongs to the universal ribosomal protein uL4 family. As to quaternary structure, part of the 50S ribosomal subunit.

One of the primary rRNA binding proteins, this protein initially binds near the 5'-end of the 23S rRNA. It is important during the early stages of 50S assembly. It makes multiple contacts with different domains of the 23S rRNA in the assembled 50S subunit and ribosome. Its function is as follows. Forms part of the polypeptide exit tunnel. This chain is Large ribosomal subunit protein uL4, found in Rhodopseudomonas palustris (strain HaA2).